The chain runs to 208 residues: MAANIQQQFGEQLLRAAQVVEEQIDQEMNKLENLEEDDLEVIRRQRMEQMKKAQKDRIEMLSHGHGKYEEVADEKEFFEATKKSDKVVCLFYLPGNFRCKIVDKHFEILARKHVGTRFIHVNAEKVHFLTTRLNIRVIPSIAIVVKQQTVDYIRGFDELGGKDEFTTETMENRLARSEVLTVEKKHTAPAKKKIIRSGVEEYDNEEDW.

The region spanning 68 to 179 (YEEVADEKEF…MENRLARSEV (112 aa)) is the Thioredoxin domain.

In terms of tissue distribution, expressed throughout the body with high expression in the nervous system, including the ventral nerve cord and tail neurons, and vulva.

It is found in the nucleus. The protein resides in the cytoplasm. Functionally, required for normal microtubule organization and function. Regulates tubulin acetylation in ALM and PLM neurons. The protein is Thioredoxin domain-containing protein 9 of Caenorhabditis elegans.